The primary structure comprises 258 residues: Imidazole glycerol phosphate synthase subunit HisF (258 aa).

Catalysis depends on residues aspartate 11 and aspartate 130.

The protein belongs to the HisA/HisF family. As to quaternary structure, heterodimer of HisH and HisF.

It is found in the cytoplasm. The catalysed reaction is 5-[(5-phospho-1-deoxy-D-ribulos-1-ylimino)methylamino]-1-(5-phospho-beta-D-ribosyl)imidazole-4-carboxamide + L-glutamine = D-erythro-1-(imidazol-4-yl)glycerol 3-phosphate + 5-amino-1-(5-phospho-beta-D-ribosyl)imidazole-4-carboxamide + L-glutamate + H(+). It participates in amino-acid biosynthesis; L-histidine biosynthesis; L-histidine from 5-phospho-alpha-D-ribose 1-diphosphate: step 5/9. Functionally, IGPS catalyzes the conversion of PRFAR and glutamine to IGP, AICAR and glutamate. The HisF subunit catalyzes the cyclization activity that produces IGP and AICAR from PRFAR using the ammonia provided by the HisH subunit. The chain is Imidazole glycerol phosphate synthase subunit HisF from Serratia proteamaculans (strain 568).